A 156-amino-acid chain; its full sequence is Small ribosomal subunit protein uS7 (156 aa).

It belongs to the universal ribosomal protein uS7 family. Part of the 30S ribosomal subunit. Contacts proteins S9 and S11.

One of the primary rRNA binding proteins, it binds directly to 16S rRNA where it nucleates assembly of the head domain of the 30S subunit. Is located at the subunit interface close to the decoding center, probably blocks exit of the E-site tRNA. The protein is Small ribosomal subunit protein uS7 of Glaesserella parasuis serovar 5 (strain SH0165) (Haemophilus parasuis).